A 219-amino-acid polypeptide reads, in one-letter code: MSLGLVGRKVGMTRIFTAEGDSIPVTVLDVSDNRVTQIKTVETDGYTAVQVAFGSRRASRVTKPLAGHLAKAGVEAGEILKEFRIEADKAAELSNGAVIGPDLFEVGQKVDVQGVSIGKGYAGTIKRYNFGSGRASHGNSRSHNVPGSIGMAQDPGRVFPGKRMTGHMGDETVTVQNLEIARIDADRKLLLVKGAVPGAKGGKVFVTPAVKTRAVKGAK.

A disordered region spans residues 133-153 (GRASHGNSRSHNVPGSIGMAQ). Glutamine 153 bears the N5-methylglutamine mark.

This sequence belongs to the universal ribosomal protein uL3 family. As to quaternary structure, part of the 50S ribosomal subunit. Forms a cluster with proteins L14 and L19. Methylated by PrmB.

One of the primary rRNA binding proteins, it binds directly near the 3'-end of the 23S rRNA, where it nucleates assembly of the 50S subunit. The polypeptide is Large ribosomal subunit protein uL3 (Burkholderia mallei (strain NCTC 10247)).